The primary structure comprises 326 residues: Acetyl-coenzyme A carboxylase carboxyl transferase subunit beta (326 aa).

Residues 25–308 (LWVKCPASGE…RRDDRSTLQL (284 aa)) form the CoA carboxyltransferase N-terminal domain. The interval 298 to 326 (RRRDDRSTLQLTPPKTHAPKPPEPKVKPD) is disordered. The segment covering 317–326 (KPPEPKVKPD) has biased composition (basic and acidic residues).

It belongs to the AccD/PCCB family. In terms of assembly, acetyl-CoA carboxylase is a heterohexamer composed of biotin carboxyl carrier protein (AccB), biotin carboxylase (AccC) and two subunits each of ACCase subunit alpha (AccA) and ACCase subunit beta (AccD).

It is found in the cytoplasm. It catalyses the reaction N(6)-carboxybiotinyl-L-lysyl-[protein] + acetyl-CoA = N(6)-biotinyl-L-lysyl-[protein] + malonyl-CoA. The protein operates within lipid metabolism; malonyl-CoA biosynthesis; malonyl-CoA from acetyl-CoA: step 1/1. In terms of biological role, component of the acetyl coenzyme A carboxylase (ACC) complex. Biotin carboxylase (BC) catalyzes the carboxylation of biotin on its carrier protein (BCCP) and then the CO(2) group is transferred by the transcarboxylase to acetyl-CoA to form malonyl-CoA. The protein is Acetyl-coenzyme A carboxylase carboxyl transferase subunit beta of Hyphomonas neptunium (strain ATCC 15444).